The primary structure comprises 153 residues: ORM1-like protein 1 (153 aa).

Residues 1 to 27 (MNVGVAHSEVNPNTRVMNSRGIWLTYA) lie on the Cytoplasmic side of the membrane. 2 helical membrane-spanning segments follow: residues 28-46 (LGVG…FSVP) and 47-64 (VVWT…YVFM). Topologically, residues 65–105 (HAVKGTPFETPDQGKARLLTHWEQLDYGVQFTSSRKFFTIS) are cytoplasmic. The next 2 helical transmembrane spans lie at 106 to 123 (PIIL…DTAH) and 124 to 140 (FVIN…PKLP). Topologically, residues 141–153 (QLHGVRIFGINKY) are cytoplasmic.

This sequence belongs to the ORM family. Ceramide-sensitive subunit of the serine palmitoyltransferase (SPT) complex, which is also composed of SPTLC1, SPTLC2/3 and SPTSSA/B.

It localises to the endoplasmic reticulum membrane. Functionally, plays an essential role in the homeostatic regulation of sphingolipid de novo biosynthesis by modulating the activity of the serine palmitoyltransferase (SPT) in response to ceramide levels. When complexed to SPT, the binding of ceramides to its N-terminus stabilizes a conformation that block SPT substrate entry, hence preventing SPT catalytic activity. Through this mechanism, maintains ceramide levels at sufficient concentrations for the production of complex sphingolipids, but which prevents the accumulation of ceramides to levels that trigger apoptosis. This Danio rerio (Zebrafish) protein is ORM1-like protein 1 (ormdl1).